The following is a 715-amino-acid chain: Eukaryotic peptide chain release factor GTP-binding subunit (715 aa).

Polar residues predominate over residues Met1–Lys12. Disordered regions lie at residues Met1 to Lys148 and Ala168 to Ala262. The segment at Ser5 to Gln128 is several sort of repeats. Residues Gln13–Gln25 show a composition bias toward low complexity. Positions Asn26–Val37 are enriched in polar residues. Composition is skewed to low complexity over residues Gln39–Gly129 and Ser176–Pro198. A charged region spans residues Gly129–Asp285. Composition is skewed to basic and acidic residues over residues Gln199 to Ala208 and Glu218 to Ala233. Residues Lys290–Arg515 form the tr-type G domain. Positions Gly299–Ser306 are G1. Gly299–Ser306 contacts GTP. A G2 region spans residues Gly355–Glu359. Residue Thr373 is modified to Phosphothreonine. Positions Asp376 to Gly379 are G3. GTP contacts are provided by residues Asp376–His380 and Asn438–Asp441. Residues Asn438–Asp441 are G4. The G5 stretch occupies residues Ser479–Tyr481.

Belongs to the TRAFAC class translation factor GTPase superfamily. Classic translation factor GTPase family. ERF3 subfamily.

The protein localises to the cytoplasm. Its function is as follows. Involved in translation termination. Stimulates the activity of ERF1. Binds guanine nucleotides. This is Eukaryotic peptide chain release factor GTP-binding subunit (SUP35) from Candida albicans (Yeast).